The following is a 67-amino-acid chain: Large ribosomal subunit protein bL35 (67 aa).

The span at 1-16 shows a compositional bias: basic residues; it reads MPKMKTKSSAKKRFRV. Residues 1–23 are disordered; sequence MPKMKTKSSAKKRFRVRPGGTVK.

Belongs to the bacterial ribosomal protein bL35 family.

This chain is Large ribosomal subunit protein bL35, found in Variovorax paradoxus (strain S110).